Here is a 434-residue protein sequence, read N- to C-terminus: Serine/threonine transporter SstT (434 aa).

Transmembrane regions (helical) follow at residues isoleucine 14 to isoleucine 34, phenylalanine 41 to isoleucine 61, phenylalanine 72 to alanine 92, alanine 135 to leucine 155, threonine 172 to leucine 192, leucine 210 to valine 230, isoleucine 282 to methionine 302, isoleucine 316 to isoleucine 336, and phenylalanine 351 to valine 371. Positions lysine 414–valine 434 are disordered.

The protein belongs to the dicarboxylate/amino acid:cation symporter (DAACS) (TC 2.A.23) family.

It localises to the cell membrane. It catalyses the reaction L-serine(in) + Na(+)(in) = L-serine(out) + Na(+)(out). It carries out the reaction L-threonine(in) + Na(+)(in) = L-threonine(out) + Na(+)(out). Functionally, involved in the import of serine and threonine into the cell, with the concomitant import of sodium (symport system). This chain is Serine/threonine transporter SstT, found in Lacticaseibacillus paracasei (strain ATCC 334 / BCRC 17002 / CCUG 31169 / CIP 107868 / KCTC 3260 / NRRL B-441) (Lactobacillus paracasei).